The following is a 153-amino-acid chain: Insulin-like growth factor 1.S (153 aa).

4 disulfide bridges follow: Cys-29–Cys-38, Cys-54–Cys-96, Cys-66–Cys-109, and Cys-100–Cys-109. Residues 49 to 77 form a b region; that stretch reads GPETLCGAELVDTLQFVCGDRGFYFSKPT. Residues 78-89 form a c region; the sequence is GYGSNNRRSHHR. The tract at residues 90 to 110 is a; the sequence is GIVDECCFQSCDFRRLEMYCA. Positions 111-118 are d; the sequence is PAKQAKSA. Positions 119–153 are cleaved as a propeptide — e peptide; it reads RSVRTQRHTDMPKAQKEVHPKNTSRGNTGSRGFRM. The segment at 119 to 153 is disordered; that stretch reads RSVRTQRHTDMPKAQKEVHPKNTSRGNTGSRGFRM. Over residues 125 to 138 the composition is skewed to basic and acidic residues; it reads RHTDMPKAQKEVHP. The segment covering 139–153 has biased composition (polar residues); the sequence is KNTSRGNTGSRGFRM.

Belongs to the insulin family. In terms of tissue distribution, expressed in adult liver, lung, heart, kidney and peritoneal fat.

Its subcellular location is the secreted. Its function is as follows. The insulin-like growth factors, isolated from plasma, are structurally and functionally related to insulin but have a much higher growth-promoting activity. Promotes head development by inhibiting Wnt signaling during embryogenesis. Acts as a ligand for IGF1R. Binds to the alpha subunit of IGF1R, leading to the activation of the intrinsic tyrosine kinase activity which autophosphorylates tyrosine residues in the beta subunit thus initiatiating a cascade of down-stream signaling events leading to activation of the PI3K-AKT/PKB and the Ras-MAPK pathways. Binds to integrins. Its binding to integrins and subsequent ternary complex formation with integrins and IGFR1 are essential for IGF1 signaling. The protein is Insulin-like growth factor 1.S of Xenopus laevis (African clawed frog).